Here is a 443-residue protein sequence, read N- to C-terminus: Proline--tRNA ligase (443 aa).

The protein belongs to the class-II aminoacyl-tRNA synthetase family. ProS type 2 subfamily. Homodimer.

It localises to the cytoplasm. The enzyme catalyses tRNA(Pro) + L-proline + ATP = L-prolyl-tRNA(Pro) + AMP + diphosphate. In terms of biological role, catalyzes the attachment of proline to tRNA(Pro) in a two-step reaction: proline is first activated by ATP to form Pro-AMP and then transferred to the acceptor end of tRNA(Pro). The sequence is that of Proline--tRNA ligase from Caulobacter vibrioides (strain ATCC 19089 / CIP 103742 / CB 15) (Caulobacter crescentus).